The chain runs to 203 residues: Outer-membrane lipoprotein carrier protein (203 aa).

The first 19 residues, 1 to 19 (MKKSIVVLFSAVLPFAVFA), serve as a signal peptide directing secretion.

It belongs to the LolA family. As to quaternary structure, monomer.

The protein resides in the periplasm. Functionally, participates in the translocation of lipoproteins from the inner membrane to the outer membrane. Only forms a complex with a lipoprotein if the residue after the N-terminal Cys is not an aspartate (The Asp acts as a targeting signal to indicate that the lipoprotein should stay in the inner membrane). This Shewanella amazonensis (strain ATCC BAA-1098 / SB2B) protein is Outer-membrane lipoprotein carrier protein.